We begin with the raw amino-acid sequence, 677 residues long: Zinc finger CCCH domain-containing protein 23 (677 aa).

Residues proline 66–glycine 117 are disordered. Positions alanine 69–proline 82 are enriched in low complexity. The span at proline 98–methionine 113 shows a compositional bias: polar residues. Residues glycine 228–leucine 255 form a C3H1-type zinc finger. In terms of domain architecture, RRM spans arginine 359–lysine 435. A coiled-coil region spans residues alanine 480 to glutamine 513. Residues threonine 535–leucine 562 are compositionally biased toward polar residues. A disordered region spans residues threonine 535–alanine 607. Residues arginine 589–leucine 601 show a composition bias toward basic and acidic residues.

The protein is Zinc finger CCCH domain-containing protein 23 of Oryza sativa subsp. japonica (Rice).